Here is a 65-residue protein sequence, read N- to C-terminus: Sodium channel neurotoxin MeuNaTxalpha-9 (65 aa).

The 63-residue stretch at 2–64 folds into the LCN-type CS-alpha/beta domain; it reads RDGYIANDRN…VPIRIPGECR (63 aa). 4 disulfides stabilise this stretch: Cys-12–Cys-63, Cys-16–Cys-36, Cys-22–Cys-46, and Cys-26–Cys-48. Arg-64 carries the post-translational modification Arginine amide.

It belongs to the long (4 C-C) scorpion toxin superfamily. Sodium channel inhibitor family. Alpha subfamily. As to expression, expressed by the venom gland.

The protein resides in the secreted. Its function is as follows. Alpha toxins bind voltage-independently at site-3 of sodium channels (Nav) and inhibit the inactivation of the activated channels, thereby blocking neuronal transmission. This Mesobuthus eupeus (Lesser Asian scorpion) protein is Sodium channel neurotoxin MeuNaTxalpha-9.